We begin with the raw amino-acid sequence, 1347 residues long: MDLLSGTYIFAVLLACVVFHSGAQEKNYTIREEMPENVLIGDLLKDLNLSLIPNKSLTTAMQFKLVYKTGDVPLIRIEEDTGEIFTTGARIDREKLCAGIPRDEHCFYEVEVAILPDEIFRLVKIRFLIEDINDNAPLFPATVINISIPENSAINSKYTLPAAVDPDVGTNGVQNYELIKSQNIFGLDVIETPEGDKMPQLIVQKELDREEKDTYVMKVKVEDGGFPQRSSTAILQVSVTDTNDNHPVFKETEIEVSIPENAPVGTSVTQLHATDADIGENAKIHFSFSNLVSNIARRLFHLNATTGLITIKEPLDREETPNHKLLVLASDGGLMPARAMVLVNVTDVNDNVPSIDIRYIVNPVNDTVVLSENIPLNTKIALITVTDKDADHNGRVTCFTDHEIPFRLRPVFSNQFLLETAAYLDYESTKEYAIKLLAADAGKPPLNQSAMLFIKVKDENDNAPVFTQSFVTVSIPENNSPGIQLTKVSATDADSGPNAEINYLLGPDAPPEFSLDRRTGMLTVVKKLDREKEDKYLFTILAKDNGVPPLTSNVTVFVSIIDQNDNSPVFTHNEYNFYVPENLPRHGTVGLITVTDPDYGDNSAVTLSILDENDDFTIDSQTGVIRPNISFDREKQESYTFYVKAEDGGRVSRSSSAKVTINVVDVNDNKPVFIVPPSNYSYELVLPSTNPGTVVFQVMAVDNDTGMNAEVRYSIVGGNTRDLFAIDQETGNITLMEKCDVTDLGLHRVLVKANDLGQPDSLFSVVIVNLFVNESVTNATLINELVRKSTEAPVTPNTEIADVSSPTSDYVKILVAAVAGTITVVVVIFITAVVRCRQAPHLKAAQKNKQNSEWATPNPENRQMIMMKKRKKKKKHSPKNLLLNFVTIEETKADDVDSDGNRVTLDLPIDLEEQTMGKYNWVTTPTTFKPDSPDLARHYKSASPQPAFQIQPETPLNSKHHIIQELPLDNTFVACDSISKCSSSSSDPYSVSDCGYPVTTFEVPVSVHTRPPMKEVVRSCTPMKESTTMEIWIHPQPQRKSEGKVAGKSQRRVTFHLPEGSQESSSDGGLGDHDAGSLTSTSHGLPLGYPQEEYFDRATPSNRTEGDGNSDPESTFIPGLKKAAEITVQPTVEEASDNCTQECLIYGHSDACWMPASLDHSSSSQAQASALCHSPPLSQASTQHHSPPVTQTIALCHSPPVTQTIALCHSPPPIQVSALHHSPPLVQATALHHSPPSAQASALCYSPPLAQAAAISHSSPLPQVIALHRSQAQSSVSLQQGWVQGADGLCSVDQGVQGSATSQFYTMSERLHPSDDSIKVIPLTTFTPRQQARPSRGDSPVMEEHPL.

Residues methionine 1–alanine 23 form the signal peptide. The Extracellular portion of the chain corresponds to glutamine 24 to lysine 812. Cadherin domains lie at lysine 26 to phenylalanine 139, proline 140 to phenylalanine 249, lysine 250 to isoleucine 355, asparagine 362 to phenylalanine 466, threonine 467 to phenylalanine 570, threonine 571 to phenylalanine 673, and proline 677 to threonine 795. N-linked (GlcNAc...) asparagine glycans are attached at residues asparagine 27, asparagine 48, and asparagine 54. The N-linked (GlcNAc...) asparagine glycan is linked to asparagine 344. Asparagine 553 is a glycosylation site (N-linked (GlcNAc...) asparagine). A glycan (N-linked (GlcNAc...) asparagine) is linked at asparagine 773. A helical membrane pass occupies residues isoleucine 813–valine 833. Over valine 834–leucine 1347 the chain is Cytoplasmic. 3 disordered regions span residues leucine 1057–glutamine 1091, arginine 1097–phenylalanine 1116, and threonine 1325–leucine 1347.

Its subcellular location is the cell membrane. Its function is as follows. Potential calcium-dependent cell-adhesion protein. The sequence is that of Protocadherin-11 X-linked (PCDH11X) from Pan troglodytes (Chimpanzee).